The primary structure comprises 458 residues: Protein RICE SALT SENSITIVE 3 (458 aa).

The span at 1–17 (MVGSGAAGGGGGGGGGG) shows a compositional bias: gly residues. Disordered stretches follow at residues 1–21 (MVGS…DHAR), 220–325 (TSPS…PEGD), 354–374 (GGGA…GHGG), and 386–458 (SHSN…TFLE). Residues 220–232 (TSPSPSSFPLKQQ) are compositionally biased toward low complexity. Over residues 245-262 (HAPPQLPPGASPLFPPGP) the composition is skewed to pro residues. A compositionally biased stretch (low complexity) spans 308–317 (QQPMAAPQQH). Residues 413–436 (SSSTTSTSPSVSASTAPAPPQQQQ) show a composition bias toward low complexity.

As to quaternary structure, interacts with BHLH094, BHLH089, TIFY11A/JAZ9 and TIFY11C/JAZ11. Forms a ternary complex with TIFY11A/JAZ9 and BHLH094 in the nucleus. Expressed in root tips. Expressed at high levels in the meristematic zone and at low levels in the elongation zone of the root tip.

The protein resides in the nucleus. The protein localises to the cytoplasm. Involved in the repression of jasmonate (JA)-induced genes. Forms a ternary complex with TIFY11A/JAZ9 and BHLH094 to negatively regulate JA-responsive genes. Involved in transcriptional regulation in the root tip. Plays a regulatory role in root cell elongation. Regulates root cell elongation during salt stress. The polypeptide is Protein RICE SALT SENSITIVE 3 (Oryza sativa subsp. japonica (Rice)).